A 425-amino-acid polypeptide reads, in one-letter code: MVAQQKNLEGYVGFANLPNQVYRKSVKRGFEFTLMVVGESGLGKSTLINSLFLTDLYAPDYPGPSHRIKKTVQVEQSKVLIKEGGVQLLLTIVDTPGFGDAVDNSNCWQPVIDYIDSKFEDYLNAESRVNRRQMPDNRVQCCLYFIAPSGHGLKPLDIEFMKRLHEKVNIIPLIAKADTLTPEECQQFKKQIMKEIQEHKIKIYEFPETDDEEENKLVKKIKDGLPLAVVGSNTIIEVNGKRVRGRQYPWGVAEVENGEHCDFTILRNMLIRTHMQDLKDVTNNVHYENYRSRKLAAVTYNGVDNNKNKGQLTKYDTGEGMSPLAQMEEERREHVAKMKKMEMEMEQVFEMKVKEKVQKLKDSEAELQRRHEQMKKNLEAQHKELEEKRRQFEEEKVNWETQQRILEQQNTSRTLEKNKKKGKIF.

The region spanning 28-297 is the Septin-type G domain; it reads RGFEFTLMVV…ENYRSRKLAA (270 aa). The G1 motif stretch occupies residues 38-45; that stretch reads GESGLGKS. GTP is bound by residues 38–45, threonine 71, glycine 97, 176–184, glycine 231, and arginine 246; these read GESGLGKS and KADTLTPEE. The tract at residues 94 to 97 is G3 motif; the sequence is DTPG. The tract at residues 175 to 178 is G4 motif; the sequence is AKAD. Residues 324-421 are a coiled coil; it reads LAQMEEERRE…SRTLEKNKKK (98 aa).

Belongs to the TRAFAC class TrmE-Era-EngA-EngB-Septin-like GTPase superfamily. Septin GTPase family. Monomer, and homodimer. Nucleotide binding promotes oligomerization. Can form heterooligomers with other family members and form filaments.

It is found in the cytoplasm. It localises to the chromosome. Its subcellular location is the centromere. The protein localises to the kinetochore. The protein resides in the cytoskeleton. It is found in the spindle. It localises to the cleavage furrow. Its subcellular location is the midbody. The protein localises to the cilium axoneme. In terms of biological role, filament-forming cytoskeletal GTPase. Required for normal organization of the actin cytoskeleton. Required for normal progress through mitosis. Involved in cytokinesis. Plays a role in ciliogenesis and collective cell movements including convergent extension during gastrulation. Controls cell elongation but not polarization during convergent extension. The chain is Septin-7 from Xenopus laevis (African clawed frog).